Reading from the N-terminus, the 287-residue chain is Protease HtpX (287 aa).

2 consecutive transmembrane segments (helical) span residues 4–24 (IFLL…VMSI) and 33–53 (GGLL…SLAI). His139 is a binding site for Zn(2+). Residue Glu140 is part of the active site. His143 contributes to the Zn(2+) binding site. A run of 2 helical transmembrane segments spans residues 154 to 174 (LIQG…AGII) and 195 to 215 (AVVF…VAYF). A Zn(2+)-binding site is contributed by Glu220.

Belongs to the peptidase M48B family. Zn(2+) serves as cofactor.

The protein resides in the cell inner membrane. The sequence is that of Protease HtpX from Shewanella halifaxensis (strain HAW-EB4).